A 157-amino-acid chain; its full sequence is UPF0756 membrane protein ABC2716 (157 aa).

4 helical membrane-spanning segments follow: residues 8-28 (FLLL…IIAI), 54-74 (LGVT…DIGF), 84-104 (LYAW…ASGI), and 117-137 (LVLG…GPLI).

This sequence belongs to the UPF0756 family.

It is found in the cell membrane. This Shouchella clausii (strain KSM-K16) (Alkalihalobacillus clausii) protein is UPF0756 membrane protein ABC2716.